The sequence spans 359 residues: Peptide chain release factor 1 (359 aa).

Position 235 is an N5-methylglutamine (glutamine 235).

This sequence belongs to the prokaryotic/mitochondrial release factor family. Methylated by PrmC. Methylation increases the termination efficiency of RF1.

It is found in the cytoplasm. Its function is as follows. Peptide chain release factor 1 directs the termination of translation in response to the peptide chain termination codons UAG and UAA. The polypeptide is Peptide chain release factor 1 (Anaplasma marginale (strain Florida)).